Reading from the N-terminus, the 663-residue chain is Polyunsaturated fatty acid lipoxygenase ALOX15 (663 aa).

A PLAT domain is found at 2-115; the sequence is GVYRIRVSTG…ILSLPEGTGC (114 aa). Residues 116–663 form the Lipoxygenase domain; the sequence is TVVEDSQGLF…PSMVENSVAI (548 aa). At Ser-149 the chain carries Phosphoserine. His-361, His-366, His-541, His-545, and Ile-663 together coordinate Fe cation.

Belongs to the lipoxygenase family. Interacts with PEBP1; in response to IL13/interleukin-13, prevents the interaction of PEBP1 with RAF1 to activate the ERK signaling cascade. The cofactor is Fe cation. As to expression, detected in leukocytes, lung and aorta.

The protein localises to the cytoplasm. The protein resides in the cytosol. Its subcellular location is the cell membrane. It localises to the lipid droplet. It catalyses the reaction (5Z,8Z,11Z,14Z)-eicosatetraenoate + O2 = (12S)-hydroperoxy-(5Z,8Z,10E,14Z)-eicosatetraenoate. It carries out the reaction (5Z,8Z,11Z,14Z)-eicosatetraenoate + O2 = (15S)-hydroperoxy-(5Z,8Z,11Z,13E)-eicosatetraenoate. The catalysed reaction is (9Z,12Z)-octadecadienoate + O2 = (13S)-hydroperoxy-(9Z,11E)-octadecadienoate. The enzyme catalyses (12S)-hydroperoxy-(5Z,8Z,10E,14Z)-eicosatetraenoate = (8S)-hydroxy-(11S,12S)-epoxy-(5Z,9E,14Z)-eicosatrienoate. It catalyses the reaction (5Z,8Z,11Z,14Z)-eicosatetraenoate + 2 O2 = (14R,15S)-dihydroperoxy-(5Z,8Z,10E,12E)-eicosatetraenoate. It carries out the reaction (5Z,8Z,11Z,14Z)-eicosatetraenoate + 2 O2 = (8S,15S)-dihydroperoxy-(5Z,9E,11Z,13E)-eicosatetraenoate. The catalysed reaction is (14S,15R)-epoxy-(5Z,8Z,11Z)-eicosatrienoate + O2 = (8S)-hydroperoxy-(14S,15R)-epoxy-(5Z,9E,11Z)-eicosatrienoate. The enzyme catalyses (14S,15R)-epoxy-(5Z,8Z,11Z)-eicosatrienoate + O2 = (12S)-hydroperoxy-(14S,15R)-epoxy-(5Z,8Z,10E)-eicosatrienoate. It catalyses the reaction (14R,15S)-epoxy-(5Z,8Z,11Z)-eicosatrienoate + O2 = (5S)-hydroperoxy-(14R,15S)-epoxy-(6E,8Z,11Z)-eicosatrienoate. It carries out the reaction (14R,15S)-epoxy-(5Z,8Z,11Z)-eicosatrienoate + O2 = (12S)-hydroperoxy-(14R,15S)-epoxy-(5Z,8Z,10E)-eicosatrienoate. The catalysed reaction is (15R)-hydroperoxy-(5Z,8Z,11Z,13E)-eicosatetraenoate = 15-oxo-(5Z,8Z,11Z,13E)-eicosatetraenoate + H2O. The enzyme catalyses (15S)-hydroperoxy-(5Z,8Z,11Z,13E)-eicosatetraenoate = (14S,15S)-epoxy-(5Z,8Z,10E,12E)-eicosatetraenoate + H2O. It catalyses the reaction (4Z,7Z,10Z,13Z,16Z)-docosapentaenoate + O2 = 14-hydroperoxy-(4Z,7Z,10Z,12E,16Z)-docosapentaenoate. It carries out the reaction (7Z,10Z,13Z,16Z,19Z)-docosapentaenoate + O2 = 14-hydroperoxy-(7Z,10Z,12E,16Z,19Z)-docosapentaenoate. The catalysed reaction is (4Z,7Z,10Z,13Z,16Z,19Z)-docosahexaenoate + O2 = (14S)-hydroperoxy-(4Z,7Z,10Z,12E,16Z,19Z)-docosahexaenoate. The enzyme catalyses (4Z,7Z,10Z,13Z,16Z,19Z)-docosahexaenoate + O2 = (17S)-hydroperoxy-(4Z,7Z,10Z,13Z,15E,19Z)-docosahexaenoate. It catalyses the reaction (7S)-hydroperoxy-(4Z,8E,10Z,13Z,16Z,19Z)-docosahexaenoate + O2 = (7S,14S)-dihydroperoxy-(4Z,8E,10Z,12E,16Z,19Z)-docosahexaenoate. It carries out the reaction (7S)-hydroperoxy-(4Z,8E,10Z,13Z,16Z,19Z)-docosahexaenoate + O2 = (7S,17S)-dihydroperoxy-(4Z,8E,10Z,13Z,15E,19Z)-docosahexaenoate. The catalysed reaction is (4Z,7Z,10Z,13Z,16Z,19Z)-docosahexaenoate + O2 = (11S)-hydroperoxy-(4Z,7Z,9E,13Z,16Z,19Z)-docosahexaenoate. The enzyme catalyses N-(5Z,8Z,11Z,14Z)-eicosatetraenoyl-taurine + O2 = N-(12S)-hydroperoxy-(5Z,8Z,10E,14Z)-eicosatetraenoyl-taurine. It catalyses the reaction N-(5Z,8Z,11Z,14Z)-eicosatetraenoyl-gamma-aminobutanoate + O2 = N-(12S)-hydroperoxy-(5Z,8Z,10E,14Z)-eicosatetraenoyl-gamma-aminobutanoate. It carries out the reaction N-(5Z,8Z,11Z,14Z)-eicosatetraenoyl-glycine + O2 = N-(12S)-hydroperoxy-(5Z,8Z,10E,14Z)-eicosatetraenoyl-glycine. The catalysed reaction is N-(5Z,8Z,11Z,14Z)-eicosatetraenoyl-L-alanine + O2 = N-(12S)-hydroperoxy-(5Z,8Z,10E,14Z)-eicosatetraenoyl-alanine. The enzyme catalyses N-(5Z,8Z,11Z,14Z)-eicosatetraenoyl-taurine + O2 = N-(15S)-hydroperoxy-(5Z,8Z,11Z,13E)-eicosatetraenoyl-taurine. It catalyses the reaction N-(5Z,8Z,11Z,14Z)-eicosatetraenoyl-gamma-aminobutanoate + O2 = N-(15S)-hydroperoxy-(5Z,8Z,11Z,13E)-eicosatetraenoyl-gamma-aminobutanoate. It carries out the reaction N-(5Z,8Z,11Z,14Z)-eicosatetraenoyl-glycine + O2 = N-(15S)-hydroperoxy-(5Z,8Z,11Z,13E)-eicosatetraenoyl-glycine. The catalysed reaction is N-(5Z,8Z,11Z,14Z)-eicosatetraenoyl-L-alanine + O2 = N-(15S)-hydroperoxy-(5Z,8Z,11Z,13E)-eicosatetraenoyl-alanine. It functions in the pathway lipid metabolism; hydroperoxy eicosatetraenoic acid biosynthesis. Its function is as follows. Non-heme iron-containing dioxygenase that catalyzes the stereo-specific peroxidation of free and esterified polyunsaturated fatty acids generating a spectrum of bioactive lipid mediators. It inserts peroxyl groups at C12 or C15 of arachidonate ((5Z,8Z,11Z,14Z)-eicosatetraenoate) producing both 12-hydroperoxyeicosatetraenoate/12-HPETE and 15-hydroperoxyeicosatetraenoate/15-HPETE. It may then act on 12-HPETE to produce hepoxilins, which may show pro-inflammatory properties. Can also peroxidize linoleate ((9Z,12Z)-octadecadienoate) to 13-hydroperoxyoctadecadienoate. May participate in the sequential oxidations of DHA ((4Z,7Z,10Z,13Z,16Z,19Z)-docosahexaenoate) to generate specialized pro-resolving mediators (SPMs)like resolvin D5 ((7S,17S)-diHPDHA) and (7S,14S)-diHPDHA, that actively down-regulate the immune response and have anti-aggregation properties with platelets. Can convert epoxy fatty acids to hydroperoxy-epoxides derivatives followed by an intramolecular nucleophilic substitution leading to the formation of monocyclic endoperoxides. Plays an important role during the maintenance of self-tolerance by peroxidizing membrane-bound phosphatidylethanolamine which can then signal the sorting process for clearance of apoptotic cells during inflammation and prevent an autoimmune response. In addition to its role in the immune and inflammatory responses, this enzyme may play a role in epithelial wound healing in the cornea through production of lipoxin A4 (LXA(4)) and docosahexaenoic acid-derived neuroprotectin D1 (NPD1; 10R,17S-HDHA), both lipid autacoids exhibit anti-inflammatory and neuroprotective properties. Furthermore, it may regulate actin polymerization which is crucial for several biological processes such as the phagocytosis of apoptotic cells. It is also implicated in the generation of endogenous ligands for peroxisome proliferator activated receptor (PPAR-gamma), hence modulating macrophage development and function. It may also exert a negative effect on skeletal development by regulating bone mass through this pathway. As well as participates in ER stress and downstream inflammation in adipocytes, pancreatic islets, and liver. Finally, it is also involved in the cellular response to IL13/interleukin-13. The protein is Polyunsaturated fatty acid lipoxygenase ALOX15 of Rattus norvegicus (Rat).